Consider the following 517-residue polypeptide: Maturase K (517 aa).

It belongs to the intron maturase 2 family. MatK subfamily.

The protein resides in the plastid. It is found in the chloroplast. Usually encoded in the trnK tRNA gene intron. Probably assists in splicing its own and other chloroplast group II introns. In Palhinhaea cernua (Nodding clubmoss), this protein is Maturase K.